The primary structure comprises 243 residues: Protein-L-isoaspartate O-methyltransferase 2 (243 aa).

Residues 21 to 42 (DACADRGHPSAERSTPETERRR) form a disordered region. Residues 23–42 (CADRGHPSAERSTPETERRR) are compositionally biased toward basic and acidic residues. Serine 94 is a catalytic residue.

It belongs to the methyltransferase superfamily. L-isoaspartyl/D-aspartyl protein methyltransferase family.

Its subcellular location is the cytoplasm. The enzyme catalyses [protein]-L-isoaspartate + S-adenosyl-L-methionine = [protein]-L-isoaspartate alpha-methyl ester + S-adenosyl-L-homocysteine. In terms of biological role, catalyzes the methyl esterification of L-isoaspartyl residues in peptides and proteins that result from spontaneous decomposition of normal L-aspartyl and L-asparaginyl residues. It plays a role in the repair and/or degradation of damaged proteins. This is Protein-L-isoaspartate O-methyltransferase 2 from Anaeromyxobacter sp. (strain Fw109-5).